The following is a 339-amino-acid chain: Isopentenyl-diphosphate delta-isomerase (339 aa).

7–8 (RK) provides a ligand contact to substrate. FMN-binding positions include Ser-65, 66–68 (SMT), Ser-96, and Asn-125. Residue 96 to 98 (SQR) participates in substrate binding. Gln-160 is a substrate binding site. Residue Glu-161 coordinates Mg(2+). Residues Lys-192, Thr-222, and 293 to 294 (AG) each bind FMN.

This sequence belongs to the IPP isomerase type 2 family. Homooctamer. Dimer of tetramers. FMN serves as cofactor. NADPH is required as a cofactor. The cofactor is Mg(2+).

The protein localises to the cytoplasm. It catalyses the reaction isopentenyl diphosphate = dimethylallyl diphosphate. Its function is as follows. Involved in the biosynthesis of isoprenoids. Catalyzes the 1,3-allylic rearrangement of the homoallylic substrate isopentenyl (IPP) to its allylic isomer, dimethylallyl diphosphate (DMAPP). The protein is Isopentenyl-diphosphate delta-isomerase of Vibrio campbellii (strain ATCC BAA-1116).